The primary structure comprises 29 residues: Dander allergen Equ c 2.0101 (29 aa).

The protein belongs to the calycin superfamily. Lipocalin family.

It localises to the secreted. The sequence is that of Dander allergen Equ c 2.0101 from Equus caballus (Horse).